A 254-amino-acid chain; its full sequence is MLLVIDVGNSNIVLGIYDEERLVRDWRVSTDKSKTIDEYGILFHDLFRLADIVFTDVKDIIISSVVPTLTGVLEKLSRQYFKISPYVVGPGIKTGMPIHYDNPKEVGADRIVNAIAGFEKYRTALIIVDFGTATTFDYVNKKGEYCGGAIAPGLAISMEALFMKASKLPRVDIARPPSIIAKNTVNSMQAGIFFGYVGLVDGIVQRMKGEGKENPKVIATGGLASLIAPESVTIEEVDEFLTLEGLRIIYQRNK.

Residue 6 to 13 (DVGNSNIV) coordinates ATP. Residues Tyr-100 and 107–110 (GADR) contribute to the substrate site. Residue Asp-109 is the Proton acceptor of the active site. Position 129 (Asp-129) interacts with K(+). Residue Thr-132 participates in ATP binding. Thr-184 lines the substrate pocket.

Belongs to the type III pantothenate kinase family. Homodimer. NH4(+) is required as a cofactor. Requires K(+) as cofactor.

It localises to the cytoplasm. It carries out the reaction (R)-pantothenate + ATP = (R)-4'-phosphopantothenate + ADP + H(+). Its pathway is cofactor biosynthesis; coenzyme A biosynthesis; CoA from (R)-pantothenate: step 1/5. In terms of biological role, catalyzes the phosphorylation of pantothenate (Pan), the first step in CoA biosynthesis. The protein is Type III pantothenate kinase of Citrifermentans bemidjiense (strain ATCC BAA-1014 / DSM 16622 / JCM 12645 / Bem) (Geobacter bemidjiensis).